We begin with the raw amino-acid sequence, 133 residues long: Small ribosomal subunit protein uS9 (133 aa).

Belongs to the universal ribosomal protein uS9 family.

The sequence is that of Small ribosomal subunit protein uS9 from Ureaplasma parvum serovar 3 (strain ATCC 700970).